The chain runs to 183 residues: Abscisic acid receptor PYL10 (183 aa).

An START-like region spans residues 20–172; it reads HELVESQCSS…NLNSLADVTE (153 aa). C27 and C153 form a disulfide bridge. Residues K56, 85-90, 112-118, and E137 contribute to the abscisate site; these read ATKSTE and RLKNYSS. A Gate loop motif is present at residues 81-85; the sequence is SGLPA. Positions 111 to 113 match the Latch loop motif; that stretch reads HRL.

This sequence belongs to the PYR/PYL/RCAR abscisic acid intracellular receptor family. Monomer. Forms heterodimer with PYL13, thus antagonizing PP2Cs-binding and ABA-independent inhibition of PP2Cs. Homodimer. Binds ABA on one subunit only. Binds to CARs protein in an ABA-independent manner, both at the plasma membrane and in the nucleus. Interacts with ABI1 and HAB1, and possibly with other PP2Cs, in an ABA-independent manner.

Its subcellular location is the cytoplasm. The protein localises to the nucleus. It localises to the cell membrane. Receptor for abscisic acid (ABA) required for ABA-mediated responses such as stomatal closure and germination inhibition. Inhibits the activity of group-A protein phosphatases type 2C (PP2Cs) in an ABA-independent manner but more efficiently when activated by ABA. Can be activated by both (-)-ABA and (+)-ABA. The sequence is that of Abscisic acid receptor PYL10 (PYL10) from Arabidopsis thaliana (Mouse-ear cress).